Reading from the N-terminus, the 274-residue chain is Dermonecrotic toxin SdSicTox-betaIIB1bviii (274 aa).

The active site involves His5. Residues Glu25 and Asp27 each contribute to the Mg(2+) site. His41 acts as the Nucleophile in catalysis. Disulfide bonds link Cys45-Cys51 and Cys47-Cys190. Asp85 is a binding site for Mg(2+).

Belongs to the arthropod phospholipase D family. Class II subfamily. Mg(2+) serves as cofactor. In terms of tissue distribution, expressed by the venom gland.

It is found in the secreted. The enzyme catalyses an N-(acyl)-sphingosylphosphocholine = an N-(acyl)-sphingosyl-1,3-cyclic phosphate + choline. It catalyses the reaction an N-(acyl)-sphingosylphosphoethanolamine = an N-(acyl)-sphingosyl-1,3-cyclic phosphate + ethanolamine. It carries out the reaction a 1-acyl-sn-glycero-3-phosphocholine = a 1-acyl-sn-glycero-2,3-cyclic phosphate + choline. The catalysed reaction is a 1-acyl-sn-glycero-3-phosphoethanolamine = a 1-acyl-sn-glycero-2,3-cyclic phosphate + ethanolamine. Its function is as follows. Dermonecrotic toxins cleave the phosphodiester linkage between the phosphate and headgroup of certain phospholipids (sphingolipid and lysolipid substrates), forming an alcohol (often choline) and a cyclic phosphate. This toxin acts on sphingomyelin (SM). It may also act on ceramide phosphoethanolamine (CPE), lysophosphatidylcholine (LPC) and lysophosphatidylethanolamine (LPE), but not on lysophosphatidylserine (LPS), and lysophosphatidylglycerol (LPG). It acts by transphosphatidylation, releasing exclusively cyclic phosphate products as second products. Induces dermonecrosis, hemolysis, increased vascular permeability, edema, inflammatory response, and platelet aggregation. This chain is Dermonecrotic toxin SdSicTox-betaIIB1bviii, found in Sicarius cf. damarensis (strain GJB-2008) (Six-eyed sand spider).